A 434-amino-acid chain; its full sequence is Putative G3BP-like protein (434 aa).

The region spanning 18–134 (IGWMFVQEYY…YFVLNDIFRF (117 aa)) is the NTF2 domain. Disordered regions lie at residues 141–180 (EEEESPDAVEKEKKDVASEPYVNGVQSQEHLPSAKEEGHY) and 274–308 (VKSQASVSSTASTTGQTVKGVNADQTQQPTAPYTQ). Phosphoserine is present on serine 145. Residues 148-157 (AVEKEKKDVA) show a composition bias toward basic and acidic residues. Residues 276-291 (SQASVSSTASTTGQTV) are compositionally biased toward low complexity. Over residues 296 to 308 (ADQTQQPTAPYTQ) the composition is skewed to polar residues. The region spanning 315–386 (TSVFVKNIPP…ATLNIEERRR (72 aa)) is the RRM domain. A disordered region spans residues 390–434 (GKFNKSGDKKSNDNYNGMKRNFRKGNRGAFDGRSKEVTTSKKQNN). Positions 419–428 (FDGRSKEVTT) are enriched in basic and acidic residues.

Its function is as follows. Probable scaffold protein that may be involved in mRNA transport. In Schizosaccharomyces pombe (strain 972 / ATCC 24843) (Fission yeast), this protein is Putative G3BP-like protein (nxt3).